We begin with the raw amino-acid sequence, 340 residues long: Phosphoribosylformylglycinamidine cyclo-ligase (340 aa).

The protein belongs to the AIR synthase family.

Its subcellular location is the cytoplasm. The catalysed reaction is 2-formamido-N(1)-(5-O-phospho-beta-D-ribosyl)acetamidine + ATP = 5-amino-1-(5-phospho-beta-D-ribosyl)imidazole + ADP + phosphate + H(+). It functions in the pathway purine metabolism; IMP biosynthesis via de novo pathway; 5-amino-1-(5-phospho-D-ribosyl)imidazole from N(2)-formyl-N(1)-(5-phospho-D-ribosyl)glycinamide: step 2/2. The polypeptide is Phosphoribosylformylglycinamidine cyclo-ligase (Streptococcus pneumoniae (strain 70585)).